We begin with the raw amino-acid sequence, 447 residues long: Argininosuccinate synthase (447 aa).

ATP-binding positions include 17–25 (AFSGGLDTS) and Ala-43. Tyr-99 is an L-citrulline binding site. Residues Gly-129 and Thr-131 each contribute to the ATP site. Positions 131, 135, and 136 each coordinate L-aspartate. Position 135 (Asn-135) interacts with L-citrulline. Asp-136 is an ATP binding site. Residues Arg-139 and Ser-192 each coordinate L-citrulline. Asp-194 serves as a coordination point for ATP. L-citrulline is bound by residues Thr-201, Glu-203, and Glu-280.

The protein belongs to the argininosuccinate synthase family. Type 2 subfamily. In terms of assembly, homotetramer.

It localises to the cytoplasm. The catalysed reaction is L-citrulline + L-aspartate + ATP = 2-(N(omega)-L-arginino)succinate + AMP + diphosphate + H(+). It participates in amino-acid biosynthesis; L-arginine biosynthesis; L-arginine from L-ornithine and carbamoyl phosphate: step 2/3. In Escherichia coli O127:H6 (strain E2348/69 / EPEC), this protein is Argininosuccinate synthase.